The following is a 763-amino-acid chain: Amine oxidase [copper-containing] 3 (763 aa).

The Cytoplasmic portion of the chain corresponds to 1–5 (MNQKT). The chain crosses the membrane as a helical; Signal-anchor for type II membrane protein span at residues 6 to 26 (ILVLLILAVITIFALVCVLLV). At 27–763 (GRGGDGGEPS…AFSHGGFSHN (737 aa)) the chain is on the extracellular side. S43 carries an O-linked (GalNAc...) serine glycan. An N-linked (GlcNAc...) asparagine glycan is attached at N137. The cysteines at positions 198 and 199 are disulfide-linked. O-linked (GalNAc...) threonine glycosylation occurs at T212. N-linked (GlcNAc...) asparagine glycans are attached at residues N232 and N294. The Proton acceptor role is filled by D386. C404 and C430 are oxidised to a cystine. The active-site Schiff-base intermediate with substrate; via topaquinone is the Y471. A 2',4',5'-topaquinone modification is found at Y471. Positions 520 and 522 each coordinate Cu(2+). Ca(2+)-binding residues include D529, L530, D531, and E572. A glycan (N-linked (GlcNAc...) (complex) asparagine) is linked at N592. N618 carries an N-linked (GlcNAc...) asparagine glycan. Positions 641, 663, and 665 each coordinate Ca(2+). A glycan (N-linked (GlcNAc...) asparagine) is linked at N666. Residues E667, D673, and L674 each contribute to the Ca(2+) site. Residue T679 is glycosylated (O-linked (GlcNAc) threonine). H684 serves as a coordination point for Cu(2+). C734 and C741 are oxidised to a cystine.

This sequence belongs to the copper/topaquinone oxidase family. In terms of assembly, homodimer; disulfide-linked. Can heterodimerize with isoform 2 leading to reduced surface expression. Probably forms heterodimers with AOC2. Cu(2+) is required as a cofactor. Ca(2+) serves as cofactor. The cofactor is L-topaquinone. Post-translationally, topaquinone (TPQ) is generated by copper-dependent autoxidation of a specific tyrosyl residue. N- and O-glycosylated. Strongly expressed on the high endothelial venules of peripheral lymph nodes and on hepatic endothelia. Also highly expressed in appendix, lung and small intestine. Expressed also in adipose tissue, in bone marrow, colon, heart, kidney, ovary, pancreas, placenta, prostate, skeletal muscle, spleen and testis. Isoform 2 seems to be the predominant transcript in fetal kidneys, fetal cartilage and fetal tonsils. The highest relative expression of isoform 2 occurs in skeletal muscle, heart, pancreas, kidney, and lung.

It is found in the cell membrane. It catalyses the reaction methylamine + O2 + H2O = formaldehyde + H2O2 + NH4(+). It carries out the reaction benzylamine + O2 + H2O = benzaldehyde + H2O2 + NH4(+). The catalysed reaction is 2-phenylethylamine + O2 + H2O = 2-phenylacetaldehyde + H2O2 + NH4(+). In terms of biological role, catalyzes the oxidative deamination of primary amines to the corresponding aldehydes with the concomitant production of hydrogen peroxide and ammonia. Has a preference for the primary monoamines methylamine and benzylamine. Could also act on 2-phenylethylamine but much less efficiently. At endothelial cells surface can also function as a cell adhesion protein that participates in lymphocyte extravasation and recirculation by mediating the binding of lymphocytes to peripheral lymph node vascular endothelial cells in an L-selectin-independent fashion. Functionally, has no semicarbazide-sensitive amine oxidase (SSAO) activity. This is Amine oxidase [copper-containing] 3 from Homo sapiens (Human).